The primary structure comprises 185 residues: Ribosome-recycling factor (185 aa).

Positions 145–164 are disordered; that stretch reads DGEAGEDEVSRAEKDLDKTT.

Belongs to the RRF family.

It is found in the cytoplasm. In terms of biological role, responsible for the release of ribosomes from messenger RNA at the termination of protein biosynthesis. May increase the efficiency of translation by recycling ribosomes from one round of translation to another. The protein is Ribosome-recycling factor of Mycobacterium sp. (strain JLS).